The following is a 505-amino-acid chain: tRNA-2-methylthio-N(6)-dimethylallyladenosine synthase (505 aa).

Residues 1–39 (MGQKAKAQAPTTHPRPHTLSSQVAPALPRRPRHAAPESL) form a disordered region. The region spanning 47–162 (MKAHLITYGC…IGAALESNER (116 aa)) is the MTTase N-terminal domain. 6 residues coordinate [4Fe-4S] cluster: C56, C92, C125, C194, C198, and C201. The Radical SAM core domain occupies 180 to 413 (PSGKLQAHLT…IARQKDWSAR (234 aa)). The TRAM domain occupies 416-479 (AQKVGTVQQV…PHMMYGHILG (64 aa)).

Belongs to the methylthiotransferase family. MiaB subfamily. Monomer. Requires [4Fe-4S] cluster as cofactor.

It is found in the cytoplasm. The catalysed reaction is N(6)-dimethylallyladenosine(37) in tRNA + (sulfur carrier)-SH + AH2 + 2 S-adenosyl-L-methionine = 2-methylsulfanyl-N(6)-dimethylallyladenosine(37) in tRNA + (sulfur carrier)-H + 5'-deoxyadenosine + L-methionine + A + S-adenosyl-L-homocysteine + 2 H(+). In terms of biological role, catalyzes the methylthiolation of N6-(dimethylallyl)adenosine (i(6)A), leading to the formation of 2-methylthio-N6-(dimethylallyl)adenosine (ms(2)i(6)A) at position 37 in tRNAs that read codons beginning with uridine. The polypeptide is tRNA-2-methylthio-N(6)-dimethylallyladenosine synthase (Deinococcus radiodurans (strain ATCC 13939 / DSM 20539 / JCM 16871 / CCUG 27074 / LMG 4051 / NBRC 15346 / NCIMB 9279 / VKM B-1422 / R1)).